A 248-amino-acid chain; its full sequence is Probable transcriptional regulatory protein FTW_1073 (248 aa).

It belongs to the TACO1 family.

The protein resides in the cytoplasm. The sequence is that of Probable transcriptional regulatory protein FTW_1073 from Francisella tularensis subsp. tularensis (strain WY96-3418).